Consider the following 459-residue polypeptide: Glycosyl hydrolase family 109 protein (459 aa).

Positions 1 to 31 (MHNIHRRNFLKAAGAATAGLVTANIALNAYA) form a signal peptide, tat-type signal. NAD(+) is bound by residues 64–65 (ER), aspartate 86, 135–138 (WEWH), 155–156 (EV), and asparagine 184. Residues tyrosine 213, arginine 232, 244–247 (YPTH), and tyrosine 326 each bind substrate. Tyrosine 244 lines the NAD(+) pocket.

The protein belongs to the Gfo/Idh/MocA family. Glycosyl hydrolase 109 subfamily. NAD(+) is required as a cofactor. Post-translationally, predicted to be exported by the Tat system. The position of the signal peptide cleavage has not been experimentally proven.

Glycosidase. The sequence is that of Glycosyl hydrolase family 109 protein from Shewanella baltica (strain OS195).